The following is a 612-amino-acid chain: MAFLQTWLADYQIPLTLAVIVFALVMFVLEWLPIDTTAILVAVILMVLGLVTPTEGIAGFSNSATVTIMAMFILSYGITRTGIIQIIRDSLIKFGGDSLRRQLLLMGFIVGPSSAFLNNTAIVAIFLPIIEEWARQRQISVSKLLIPLSYATILGGMITLLGTSTNILASGLAEKLTGQGFSIFQFTPLGLLTFSVGLIYIVLAAPILLPARRNISDGNVAAEYQIKDYVSEIIIPPRSSLIGQTLRQSEIQRKFDIDVLEIIHNDTHFPQPLADRVLTMGDILLVRAGREDLLRIKDERGIEILADVQFVSAETNNAGPLESSEEKVAEVLILSNSRLIGSTLKDLRFRQRYNATVIAIRRGEELIRQRLGKVRLKFGDLLLLQGPRESFLGLQTTRELLVLEEKPLDNLRLDKAKTAIAIVALVIVIAGLDILPISVTSWAGVMAMVISGCLKPGEIYGAIRWDVIFLLAGLIPLGTAMENSGTTAWFASFLADAGGHLSGYALLLLFYLATALLTEILSNNATVVLMLPIAFQVAQSLGLNPLAFMFVVTFAASNSFMSPIGYQTNTMVYGPGGYRFTDFARIGAPLTVILTLATPLLVMLIYGVQPTN.

6 helical membrane passes run 13–33 (IPLTLAVIVFALVMFVLEWLP), 38–58 (AILVAVILMVLGLVTPTEGIA), 67–87 (TIMAMFILSYGITRTGIIQII), 107–127 (GFIVGPSSAFLNNTAIVAIFL), 144–164 (LLIPLSYATILGGMITLLGTS), and 189–209 (LGLLTFSVGLIYIVLAAPILL). 2 consecutive RCK C-terminal domains span residues 218–302 (GNVA…ERGI) and 316–403 (NNAG…LLVL). 6 consecutive transmembrane segments (helical) span residues 419–439 (AIAIVALVIVIAGLDILPISV), 459–479 (IYGAIRWDVIFLLAGLIPLGT), 501–521 (LSGYALLLLFYLATALLTEIL), 525–545 (ATVVLMLPIAFQVAQSLGLNP), 546–566 (LAFMFVVTFAASNSFMSPIGY), and 586–606 (IGAPLTVILTLATPLLVMLIY).

This sequence belongs to the SLC13A/DASS transporter (TC 2.A.47) family. NADC subfamily.

It localises to the cell membrane. This is an uncharacterized protein from Synechocystis sp. (strain ATCC 27184 / PCC 6803 / Kazusa).